The primary structure comprises 286 residues: 4-diphosphocytidyl-2-C-methyl-D-erythritol kinase (286 aa).

The active site involves K11. 94–104 contacts ATP; that stretch reads PMGGGIGGGSS. D136 is an active-site residue.

The protein belongs to the GHMP kinase family. IspE subfamily.

It catalyses the reaction 4-CDP-2-C-methyl-D-erythritol + ATP = 4-CDP-2-C-methyl-D-erythritol 2-phosphate + ADP + H(+). It functions in the pathway isoprenoid biosynthesis; isopentenyl diphosphate biosynthesis via DXP pathway; isopentenyl diphosphate from 1-deoxy-D-xylulose 5-phosphate: step 3/6. Functionally, catalyzes the phosphorylation of the position 2 hydroxy group of 4-diphosphocytidyl-2C-methyl-D-erythritol. The sequence is that of 4-diphosphocytidyl-2-C-methyl-D-erythritol kinase from Pseudomonas putida (strain W619).